Consider the following 164-residue polypeptide: Neurotrophin-3 (164 aa).

An N-terminal signal peptide occupies residues 1-3 (IQS). Positions 4-120 (TNMDQQGSLT…ALNRTSRRKR (117 aa)) are excised as a propeptide. The N-linked (GlcNAc...) asparagine glycan is linked to asparagine 113.

Belongs to the NGF-beta family.

It is found in the secreted. Functionally, seems to promote the survival of visceral and proprioceptive sensory neurons. This chain is Neurotrophin-3 (NTF3), found in Sanzinia madagascariensis (Madagascar tree boa).